A 310-amino-acid polypeptide reads, in one-letter code: Thioredoxin reductase (310 aa).

FAD is bound at residue 35-42 (ERGMPGGQ). Cys134 and Cys137 form a disulfide bridge. 277-286 (DVRDKGLRQI) provides a ligand contact to FAD.

It belongs to the class-II pyridine nucleotide-disulfide oxidoreductase family. As to quaternary structure, homodimer. The cofactor is FAD.

The protein localises to the cytoplasm. The catalysed reaction is [thioredoxin]-dithiol + NADP(+) = [thioredoxin]-disulfide + NADPH + H(+). The sequence is that of Thioredoxin reductase (trxB) from Staphylococcus epidermidis (strain ATCC 35984 / DSM 28319 / BCRC 17069 / CCUG 31568 / BM 3577 / RP62A).